A 319-amino-acid chain; its full sequence is MDFILKMKDKSLKNIKLTREEGLRLFNSNLEELIKEANNIRKEIHGDGIDLCSIINGKSGRCGEDCAFCAQSKYHKTNISEYPLLDYEKIKKVAKENEDEGVHRFSIVTSGRGLYGEEFERVITYYSNLNKELKINLCASHGIINKESLIKLKKAGVKRYHHNLETSRNYYDKICKTHSYEERVKTIKNAKEAGLEVCSGGIIGLGETILDRIDLAITLRELEIKSIPINVLSAIKGTKLQNMIPLNEEEILRTIAVFRFINPEAKIRLAGGRYLLKNFGENAFKAGANATITGNLLTTCGNKIKDDKRLIENIGMRIF.

Residues I44–R273 form the Radical SAM core domain. C62, C66, and C69 together coordinate [4Fe-4S] cluster. Residues S106, C138, C198, and R268 each contribute to the [2Fe-2S] cluster site.

The protein belongs to the radical SAM superfamily. Biotin synthase family. Homodimer. Requires [4Fe-4S] cluster as cofactor. [2Fe-2S] cluster serves as cofactor.

The catalysed reaction is (4R,5S)-dethiobiotin + (sulfur carrier)-SH + 2 reduced [2Fe-2S]-[ferredoxin] + 2 S-adenosyl-L-methionine = (sulfur carrier)-H + biotin + 2 5'-deoxyadenosine + 2 L-methionine + 2 oxidized [2Fe-2S]-[ferredoxin]. The protein operates within cofactor biosynthesis; biotin biosynthesis; biotin from 7,8-diaminononanoate: step 2/2. In terms of biological role, catalyzes the conversion of dethiobiotin (DTB) to biotin by the insertion of a sulfur atom into dethiobiotin via a radical-based mechanism. The chain is Biotin synthase from Clostridium perfringens (strain 13 / Type A).